The primary structure comprises 242 residues: Argininosuccinate synthase (242 aa).

Belongs to the argininosuccinate synthase family. Type 2 subfamily. In terms of assembly, homotetramer.

It is found in the cytoplasm. It carries out the reaction L-citrulline + L-aspartate + ATP = 2-(N(omega)-L-arginino)succinate + AMP + diphosphate + H(+). The protein operates within amino-acid biosynthesis; L-arginine biosynthesis; L-arginine from L-ornithine and carbamoyl phosphate: step 2/3. The polypeptide is Argininosuccinate synthase (argG) (Dickeya chrysanthemi (Pectobacterium chrysanthemi)).